The primary structure comprises 359 residues: Probable S-adenosylmethionine-dependent methyltransferase At5g38100 (359 aa).

Residues tyrosine 19, cysteine 63, asparagine 68, aspartate 104, serine 133, and phenylalanine 134 each contribute to the S-adenosyl-L-homocysteine site. Mg(2+)-binding residues include asparagine 172, aspartate 258, and phenylalanine 260.

Belongs to the methyltransferase superfamily. Type-7 methyltransferase family. In terms of assembly, homodimer. It depends on Mg(2+) as a cofactor.

The chain is Probable S-adenosylmethionine-dependent methyltransferase At5g38100 from Arabidopsis thaliana (Mouse-ear cress).